Here is a 351-residue protein sequence, read N- to C-terminus: Ion-translocating oxidoreductase complex subunit D (351 aa).

A run of 3 helical transmembrane segments spans residues 37–57 (YFFG…AILA), 88–108 (AIPP…AIVI), and 123–143 (PAMA…TTWL). Thr187 is subject to FMN phosphoryl threonine. 4 helical membrane passes run 214–234 (FAGL…LFLL), 241–261 (WHIP…FAVF), 270–290 (IFNL…TDPV), and 300–317 (LYYG…RSWG).

The protein belongs to the NqrB/RnfD family. In terms of assembly, the complex is composed of six subunits: RnfA, RnfB, RnfC, RnfD, RnfE and RnfG. The cofactor is FMN.

Its subcellular location is the cell inner membrane. Part of a membrane-bound complex that couples electron transfer with translocation of ions across the membrane. This Aliivibrio salmonicida (strain LFI1238) (Vibrio salmonicida (strain LFI1238)) protein is Ion-translocating oxidoreductase complex subunit D.